An 87-amino-acid chain; its full sequence is Large ribosomal subunit protein bL27 (87 aa).

Belongs to the bacterial ribosomal protein bL27 family.

The protein is Large ribosomal subunit protein bL27 of Phocaeicola vulgatus (strain ATCC 8482 / DSM 1447 / JCM 5826 / CCUG 4940 / NBRC 14291 / NCTC 11154) (Bacteroides vulgatus).